A 169-amino-acid polypeptide reads, in one-letter code: Cell division inhibitor SulA (169 aa).

Residues 106-112 (ALRTGNY) are ftsZ binding. A lon protease binding region spans residues 162–169 (KIHSNLYH).

It belongs to the SulA family. As to quaternary structure, interacts with FtsZ. Post-translationally, is rapidly cleaved and degraded by the Lon protease once DNA damage is repaired.

Functionally, component of the SOS system and an inhibitor of cell division. Accumulation of SulA causes rapid cessation of cell division and the appearance of long, non-septate filaments. In the presence of GTP, binds a polymerization-competent form of FtsZ in a 1:1 ratio, thus inhibiting FtsZ polymerization and therefore preventing it from participating in the assembly of the Z ring. This mechanism prevents the premature segregation of damaged DNA to daughter cells during cell division. This is Cell division inhibitor SulA from Salmonella choleraesuis (strain SC-B67).